The chain runs to 301 residues: MFFRNLTLFRFPTTLDFSQIDTLLPPVQLKPVGPLEMSSRGFISPFGRDEQGVLSHRLEDFLWLTVGGEDKILPGAVVNDLLERKVAEIEEKEGRRPGGKARKRLKDDLIHELLPRAFVKSSRTDAILDLQHGYIAVNSSSRKSGENVMSEIRGALGSFPALPLNAEVAPRAILTGWIAGEPLPEGLSLGEECEMKDPIEGGAVVKCQHQELRGDEIDKHLEAGKQVTKLALVLDDNLSFVLGDDLVIRKLKFLDGALDQLEHSEDDGARAELDARFTLMSAEIRRLFLLLETALKLSKAE.

Belongs to the RdgC family.

The protein localises to the cytoplasm. Its subcellular location is the nucleoid. Its function is as follows. May be involved in recombination. This is Recombination-associated protein RdgC from Xanthomonas oryzae pv. oryzae (strain MAFF 311018).